The primary structure comprises 587 residues: Calcium/calmodulin-dependent protein kinase kinase 2 (587 aa).

Residues 1–11 (MSSCVSSQPTS) are compositionally biased toward polar residues. 2 disordered regions span residues 1–32 (MSSC…SQKP) and 74–115 (EADG…SSLD). The residue at position 2 (serine 2) is an N-acetylserine. A phosphoserine mark is found at serine 99, serine 113, serine 128, serine 132, and serine 136. Residues 101–115 (QERSQGGPASSSSLD) show a composition bias toward polar residues. The 282-residue stretch at 164-445 (YTLKDEIGKG…VPEIKLHPWV (282 aa)) folds into the Protein kinase domain. Residues 170-178 (IGKGSYGVV) and lysine 193 each bind ATP. The segment at 203-225 (QAGFPRRPPPRGTRPAPGGCIQP) is RP domain. Residues 204–224 (AGFPRRPPPRGTRPAPGGCIQ) are disordered. The Proton acceptor role is filled by aspartate 311. The interval 471-476 (ENSVKH) is autoinhibitory domain. Residues 474-499 (VKHIPSLATVILVKTMIRKRSFGNPF) are calmodulin-binding. Phosphoserine is present on residues serine 494 and serine 510. Residues 496–587 (GNPFEGSRRE…QQPEEAMEPE (92 aa)) are disordered. Residues 520–535 (PTREWEPLSEPKEARQ) show a composition bias toward basic and acidic residues. Over residues 569–579 (PGSPPRTPPQQ) the composition is skewed to pro residues. The residue at position 571 (serine 571) is a Phosphoserine.

Belongs to the protein kinase superfamily. Ser/Thr protein kinase family. In terms of assembly, interacts with calmodulin. In terms of processing, phosphorylated by PKA. Each isoform may show a different pattern of phosphorylation. Autophosphorylated. Mainly expressed in brain, but detected in all tissues tested (at protein level). In the brain, isoform 1 may be predominant. with high levels in the cerebellum and hippocampus, although isoform 3 is detectable. Isoform 3 is also expressed in lung.

It localises to the nucleus. The protein resides in the cytoplasm. Its subcellular location is the cell projection. The protein localises to the neuron projection. It catalyses the reaction L-seryl-[protein] + ATP = O-phospho-L-seryl-[protein] + ADP + H(+). The catalysed reaction is L-threonyl-[protein] + ATP = O-phospho-L-threonyl-[protein] + ADP + H(+). Its activity is regulated as follows. Activated by Ca(2+)/calmodulin. Binding of calmodulin may relieve intrasteric autoinhibition. Autophosphorylation does not alter activity or regulation by Ca(2+)/calmodulin. In part, activity is independent on Ca(2+)/calmodulin. Functionally, calcium/calmodulin-dependent protein kinase belonging to a proposed calcium-triggered signaling cascade involved in a number of cellular processes. Phosphorylates CAMK1 and CAMK4. Phosphorylates CAMK1D. Seems to be involved in hippocampal activation of CREB1. Efficiently phosphorylates 5'-AMP-activated protein kinase (AMPK) trimer, including that consisting of PRKAA1, PRKAB1 and PRKAG1. This phosphorylation is stimulated in response to Ca(2+) signals. May play a role in neurite growth. Isoform 2 may promote neurite elongation, while isoform 1 may promoter neurite branching. This Rattus norvegicus (Rat) protein is Calcium/calmodulin-dependent protein kinase kinase 2 (Camkk2).